Consider the following 565-residue polypeptide: Putative pentatricopeptide repeat-containing protein At3g05240 (565 aa).

PPR repeat units lie at residues 37-70, 71-105, 106-140, 141-171, 172-206, 207-241, 250-280, 281-315, 316-350, 351-381, 382-416, 418-448, and 454-484; these read NVIP…IDCP, SVYI…GYSP, DYFT…GFEV, NMYV…IPQW, NVVA…GVKA, NETI…GFDP, NVIL…MPER, TLVS…GIAP, DKVT…GFVK, DAAI…LEKK, DTIA…GNAT, DGIT…MRDL, and TVEH…MPVK. Residues 489–564 are type E motif; the sequence is IWGALLNGCD…VLGHSSVETM (76 aa).

The protein belongs to the PPR family. PCMP-E subfamily.

This is Putative pentatricopeptide repeat-containing protein At3g05240 (PCMP-E82) from Arabidopsis thaliana (Mouse-ear cress).